The sequence spans 221 residues: Peroxiredoxin 2 (221 aa).

The 156-residue stretch at P15–T170 folds into the Thioredoxin domain. C56 functions as the Cysteine sulfenic acid (-SOH) intermediate in the catalytic mechanism. R133 serves as a coordination point for substrate. A disulfide bond links C211 and C217.

It belongs to the peroxiredoxin family. Prx6 subfamily. In terms of assembly, homodecamer. Pentamer of dimers that assemble into a ring structure.

The protein resides in the cytoplasm. The enzyme catalyses a hydroperoxide + [thioredoxin]-dithiol = an alcohol + [thioredoxin]-disulfide + H2O. Functionally, thiol-specific peroxidase that catalyzes the reduction of hydrogen peroxide and organic hydroperoxides to water and alcohols, respectively. Plays a role in cell protection against oxidative stress by detoxifying peroxides. This is Peroxiredoxin 2 from Caldanaerobacter subterraneus subsp. tengcongensis (strain DSM 15242 / JCM 11007 / NBRC 100824 / MB4) (Thermoanaerobacter tengcongensis).